Here is a 940-residue protein sequence, read N- to C-terminus: Valine--tRNA ligase (940 aa).

The 'HIGH' region signature appears at 47–57; the sequence is PNVTGILHMGH. A 'KMSKS' region motif is present at residues 564-568; the sequence is KLSKS. K567 contacts ATP. Residues 873–937 adopt a coiled-coil conformation; it reads VEHIAKEKTR…ELQSILDKLA (65 aa).

Belongs to the class-I aminoacyl-tRNA synthetase family. ValS type 1 subfamily. Monomer.

The protein resides in the cytoplasm. The catalysed reaction is tRNA(Val) + L-valine + ATP = L-valyl-tRNA(Val) + AMP + diphosphate. Its function is as follows. Catalyzes the attachment of valine to tRNA(Val). As ValRS can inadvertently accommodate and process structurally similar amino acids such as threonine, to avoid such errors, it has a 'posttransfer' editing activity that hydrolyzes mischarged Thr-tRNA(Val) in a tRNA-dependent manner. In Chlamydia abortus (strain DSM 27085 / S26/3) (Chlamydophila abortus), this protein is Valine--tRNA ligase.